The chain runs to 227 residues: Protein FAM3C (227 aa).

The first 24 residues, 1-24 (MRVAGAAKLVVAVAVFLLTFYVIS), serve as a signal peptide directing secretion. 2 disulfide bridges follow: Cys58/Cys86 and Cys64/Cys221. A GG-type lectin domain is found at 67 to 225 (KHFAFKMASG…VEMEGCIPQK (159 aa)).

It belongs to the FAM3 family.

The protein localises to the secreted. The protein resides in the cytoplasmic vesicle. Its function is as follows. May be involved in retinal laminar formation. Promotes epithelial to mesenchymal transition. This is Protein FAM3C (FAM3C) from Bos taurus (Bovine).